Here is a 190-residue protein sequence, read N- to C-terminus: MLPINRQQHILKWLKEEGSLRISDISARFGVSEMTVYRDVNQLVQSNQVIKTAGGITLPVRTPQTDHMCSYCLKPVNQAHSVQLITVNQDIEQLCCAHCAFLRYADKTEEVSHLICRDFLLQTTVSAGSAYFVVNAELNLHCCQPQAIPFATLDHAERFQKGFGGAVCTFDQALEDMLQDRKKRCTCTKK.

The region spanning 3–58 is the HTH deoR-type domain; the sequence is PINRQQHILKWLKEEGSLRISDISARFGVSEMTVYRDVNQLVQSNQVIKTAGGITL. The segment at residues 20 to 39 is a DNA-binding region (H-T-H motif); sequence LRISDISARFGVSEMTVYRD.

The protein resides in the cytoplasm. May act as a negative transcriptional regulator of cutJ/ycnJ in the presence of copper. May use copper as a corepressor. This chain is HTH-type transcriptional repressor CutR, found in Bacillus subtilis (strain 168).